We begin with the raw amino-acid sequence, 504 residues long: Maturase K (504 aa).

This sequence belongs to the intron maturase 2 family. MatK subfamily.

The protein resides in the plastid. Its subcellular location is the chloroplast. Usually encoded in the trnK tRNA gene intron. Probably assists in splicing its own and other chloroplast group II introns. The sequence is that of Maturase K from Lablab purpureus (Hyacinth bean).